A 429-amino-acid polypeptide reads, in one-letter code: Probable exoglucanase GH6D (429 aa).

Residues 1–17 (MRAVYAILAGLLATGSA) form the signal peptide. Positions 75 and 77 each coordinate substrate. Active-site proton donor residues include aspartate 115 and aspartate 162. Asparagine 206 and tryptophan 209 together coordinate substrate. A glycan (N-linked (GlcNAc...) asparagine) is linked at asparagine 237. Residues asparagine 240, tryptophan 300, lysine 328, and glutamate 332 each coordinate substrate. Residues 240–261 (NYNPYSTNNPPPYTAGSPSADE) are disordered. The interval 362 to 390 (PEIRADGGGGGSPAPGPSSTAVAPSPSAT) is disordered. Over residues 378-390 (PSSTAVAPSPSAT) the composition is skewed to low complexity. The CBM1 domain occupies 394-429 (NCAARWAQCGGQGWTGPTCCAQGTCQASNQWYSQCL).

The protein belongs to the glycosyl hydrolase 6 (cellulase B) family.

The protein resides in the secreted. Its function is as follows. Probable exoglucanase that may play an important function in biomass degradation by catalyzing the hydrolysis of cellulose. The chain is Probable exoglucanase GH6D from Podospora anserina (strain S / ATCC MYA-4624 / DSM 980 / FGSC 10383) (Pleurage anserina).